Consider the following 589-residue polypeptide: Transmembrane 9 superfamily member 1 (589 aa).

An N-terminal signal peptide occupies residues Met-1 to Ala-24. Residues Ser-25–Trp-222 are Lumenal-facing. The chain crosses the membrane as a helical span at residues Phe-223–Leu-243. Over Met-244–Ala-293 the chain is Cytoplasmic. Residues Val-294–Val-314 form a helical membrane-spanning segment. Residues Gly-315–Arg-321 are Lumenal-facing. A helical membrane pass occupies residues Gly-322 to Val-342. Residues Ser-343–Ser-364 are Cytoplasmic-facing. A helical membrane pass occupies residues Leu-365 to Gly-385. At Ser-386–Met-395 the chain is on the lumenal side. The helical transmembrane segment at Val-396 to Val-416 threads the bilayer. Over Gly-417–Val-448 the chain is Cytoplasmic. Residues Val-449–Phe-469 form a helical membrane-spanning segment. At Thr-470–Tyr-481 the chain is on the lumenal side. A helical transmembrane segment spans residues Gly-482–Gly-502. Residues Thr-503–Ser-518 lie on the Cytoplasmic side of the membrane. The chain crosses the membrane as a helical span at residues Phe-519 to Val-539. Residues Lys-540–Ser-550 are Lumenal-facing. The helical transmembrane segment at Phe-551 to Gly-571 threads the bilayer. The Cytoplasmic portion of the chain corresponds to Tyr-572 to Asp-589. The Endoplasmic reticulum export signal signature appears at Phe-578 to Tyr-583. The Golgi retention signal signature appears at Lys-587 to Asp-589.

This sequence belongs to the nonaspanin (TM9SF) (TC 9.A.2) family. Ubiquitous.

The protein localises to the endosome membrane. Its subcellular location is the golgi apparatus membrane. This chain is Transmembrane 9 superfamily member 1, found in Arabidopsis thaliana (Mouse-ear cress).